Reading from the N-terminus, the 481-residue chain is UDP-N-acetylmuramate--L-alanine ligase (481 aa).

ATP is bound at residue 126–132; that stretch reads GTHGKTT.

The protein belongs to the MurCDEF family.

The protein resides in the cytoplasm. The catalysed reaction is UDP-N-acetyl-alpha-D-muramate + L-alanine + ATP = UDP-N-acetyl-alpha-D-muramoyl-L-alanine + ADP + phosphate + H(+). The protein operates within cell wall biogenesis; peptidoglycan biosynthesis. Functionally, cell wall formation. The chain is UDP-N-acetylmuramate--L-alanine ligase from Marinobacter nauticus (strain ATCC 700491 / DSM 11845 / VT8) (Marinobacter aquaeolei).